A 255-amino-acid polypeptide reads, in one-letter code: Malonyl-[acyl-carrier protein] O-methyltransferase (255 aa).

The protein belongs to the methyltransferase superfamily.

The catalysed reaction is malonyl-[ACP] + S-adenosyl-L-methionine = malonyl-[ACP] methyl ester + S-adenosyl-L-homocysteine. It participates in cofactor biosynthesis; biotin biosynthesis. In terms of biological role, converts the free carboxyl group of a malonyl-thioester to its methyl ester by transfer of a methyl group from S-adenosyl-L-methionine (SAM). It allows to synthesize pimeloyl-ACP via the fatty acid synthetic pathway. The protein is Malonyl-[acyl-carrier protein] O-methyltransferase of Acinetobacter baylyi (strain ATCC 33305 / BD413 / ADP1).